A 61-amino-acid polypeptide reads, in one-letter code: Small ribosomal subunit protein uS14 (61 aa).

Residues C24, C27, C40, and C43 each coordinate Zn(2+).

The protein belongs to the universal ribosomal protein uS14 family. Zinc-binding uS14 subfamily. In terms of assembly, part of the 30S ribosomal subunit. Contacts proteins S3 and S10. It depends on Zn(2+) as a cofactor.

Its function is as follows. Binds 16S rRNA, required for the assembly of 30S particles and may also be responsible for determining the conformation of the 16S rRNA at the A site. This Streptococcus equi subsp. zooepidemicus (strain H70) protein is Small ribosomal subunit protein uS14.